Reading from the N-terminus, the 497-residue chain is Acetyltransferase adrJ (497 aa).

Catalysis depends on proton acceptor residues His-174 and Asp-422. The interval 430-451 (SSAQSSSQNTQKKGKPSYVNGV) is disordered.

This sequence belongs to the plant acyltransferase family. As to quaternary structure, monomer.

Its pathway is secondary metabolite biosynthesis; terpenoid biosynthesis. Its function is as follows. Acetyltransferase; part of the gene cluster that mediates the biosynthesis of andrastins, meroterpenoid compounds that exhibit inhibitory activity against ras farnesyltransferase, suggesting that they could be promising leads for antitumor agents. The first step of the pathway is the synthesis of 3,5-dimethylorsellinic acid (DMOA) by the polyketide synthase adrD via condensation of one acetyl-CoA starter unit with 3 malonyl-CoA units and 2 methylations. DMAO is then converted to farnesyl-DMAO by the prenyltransferase adrG. The methyltransferase adrK catalyzes the methylation of the carboxyl group of farnesyl-DMAO to farnesyl-DMAO methyl ester which is further converted to epoxyfarnesyl-DMAO methyl ester by the FAD-dependent monooxygenase adrH. The terpene cyclase adrI then catalyzes the carbon skeletal rearrangement to generate the andrastin E, the first compound in the pathway having the andrastin scaffold, with the tetracyclic ring system. The post-cyclization tailoring enzymes adrF, adrE, adrJ, and adrA, are involved in the conversion of andrastin E into andrastin A. The short chain dehydrogenase adrF is responsible for the oxidation of the C-3 a hydroxyl group of andrastin E to yield the corresponding ketone, andrastin D. The ketoreductase adrE stereoselectively reduces the carbonyl moiety to reverse the stereochemistry of the C-3 position to yield andrastin F. The acetyltransferase adrJ is the acetyltransferase that attaches the acetyl group to the C-3 hydroxyl group of andrastin F to yield andrastin C. Finally, the cytochrome P450 monooxygenase adrA catalyzes two sequential oxidation reactions of the C-23 methyl group, to generate the corresponding alcohol andrastin B, and aldehyde andrastin A. The polypeptide is Acetyltransferase adrJ (Penicillium rubens (strain ATCC 28089 / DSM 1075 / NRRL 1951 / Wisconsin 54-1255) (Penicillium chrysogenum)).